The sequence spans 200 residues: Small ribosomal subunit protein uS4 (200 aa).

Positions threonine 22–lysine 42 are disordered. The region spanning serine 92–lysine 152 is the S4 RNA-binding domain.

The protein belongs to the universal ribosomal protein uS4 family. In terms of assembly, part of the 30S ribosomal subunit. Contacts protein S5. The interaction surface between S4 and S5 is involved in control of translational fidelity.

Functionally, one of the primary rRNA binding proteins, it binds directly to 16S rRNA where it nucleates assembly of the body of the 30S subunit. With S5 and S12 plays an important role in translational accuracy. This is Small ribosomal subunit protein uS4 from Bacillus licheniformis (strain ATCC 14580 / DSM 13 / JCM 2505 / CCUG 7422 / NBRC 12200 / NCIMB 9375 / NCTC 10341 / NRRL NRS-1264 / Gibson 46).